We begin with the raw amino-acid sequence, 445 residues long: Tubulin beta chain (445 aa).

The MREI motif signature appears at Met-1–Ile-4. Gln-11 contacts GTP. At Ser-40 the chain carries Phosphoserine. Lys-58 carries the post-translational modification N6-acetyllysine; alternate. An N6-succinyllysine; alternate modification is found at Lys-58. A Glycyl lysine isopeptide (Lys-Gly) (interchain with G-Cter in ubiquitin); alternate cross-link involves residue Lys-58. Residues Glu-69, Ser-138, Gly-142, Thr-143, and Gly-144 each contribute to the GTP site. Position 69 (Glu-69) interacts with Mg(2+). Residue Ser-172 is modified to Phosphoserine; by CDK1. GTP is bound by residues Asn-204 and Asn-226. Thr-285 and Thr-290 each carry phosphothreonine. Arg-318 carries the post-translational modification Omega-N-methylarginine. A Glycyl lysine isopeptide (Lys-Gly) (interchain with G-Cter in ubiquitin) cross-link involves residue Lys-324. Positions Gln-424–Ala-445 are disordered. Acidic residues predominate over residues Thr-429–Ala-445. Glu-438 is subject to 5-glutamyl polyglutamate.

It belongs to the tubulin family. As to quaternary structure, dimer of alpha and beta chains. A typical microtubule is a hollow water-filled tube with an outer diameter of 25 nm and an inner diameter of 15 nM. Alpha-beta heterodimers associate head-to-tail to form protofilaments running lengthwise along the microtubule wall with the beta-tubulin subunit facing the microtubule plus end conferring a structural polarity. Microtubules usually have 13 protofilaments but different protofilament numbers can be found in some organisms and specialized cells. Interacts with NCKAP5L. The cofactor is Mg(2+). In terms of processing, some glutamate residues at the C-terminus are polyglycylated, resulting in polyglycine chains on the gamma-carboxyl group. Glycylation is mainly limited to tubulin incorporated into axonemes (cilia and flagella) whereas glutamylation is prevalent in neuronal cells, centrioles, axonemes, and the mitotic spindle. Both modifications can coexist on the same protein on adjacent residues, and lowering polyglycylation levels increases polyglutamylation, and reciprocally. Cilia and flagella glycylation is required for their stability and maintenance. Flagella glycylation controls sperm motility. Some glutamate residues at the C-terminus are polyglutamylated, resulting in polyglutamate chains on the gamma-carboxyl group. Polyglutamylation plays a key role in microtubule severing by spastin (SPAST). SPAST preferentially recognizes and acts on microtubules decorated with short polyglutamate tails: severing activity by SPAST increases as the number of glutamates per tubulin rises from one to eight, but decreases beyond this glutamylation threshold. Post-translationally, phosphorylated on Ser-172 by CDK1 during the cell cycle, from metaphase to telophase, but not in interphase. This phosphorylation inhibits tubulin incorporation into microtubules.

The protein resides in the cytoplasm. Its subcellular location is the cytoskeleton. Its function is as follows. Tubulin is the major constituent of microtubules, a cylinder consisting of laterally associated linear protofilaments composed of alpha- and beta-tubulin heterodimers. Microtubules grow by the addition of GTP-tubulin dimers to the microtubule end, where a stabilizing cap forms. Below the cap, tubulin dimers are in GDP-bound state, owing to GTPase activity of alpha-tubulin. In Sus scrofa (Pig), this protein is Tubulin beta chain.